The following is a 1081-amino-acid chain: Carbamoyl phosphate synthase large chain (1081 aa).

The segment at 1-403 (MPRRNDLNKI…SFQKALRSLE (403 aa)) is carboxyphosphate synthetic domain. 11 residues coordinate ATP: Arg-129, Arg-170, Gly-177, Lys-209, Leu-211, Glu-216, Gly-242, Val-243, His-244, Gln-286, and Glu-300. The region spanning 133-329 (KEAMARIGVP…IAKFAAKLAV (197 aa)) is the ATP-grasp 1 domain. Positions 286, 300, and 302 each coordinate Mg(2+). Mn(2+)-binding residues include Gln-286, Glu-300, and Asn-302. Residues 404–553 (TGRFGFGCDR…STYEPEECEV (150 aa)) are oligomerization domain. A carbamoyl phosphate synthetic domain region spans residues 554–944 (LPSDKPKVMI…AFAKAELGAG (391 aa)). One can recognise an ATP-grasp 2 domain in the interval 686-878 (EKILHELEIS…LAKIASLVMS (193 aa)). Positions 722, 761, 763, 768, 794, 795, 796, 797, 837, and 849 each coordinate ATP. Residues Gln-837, Glu-849, and Asn-851 each coordinate Mg(2+). Positions 837, 849, and 851 each coordinate Mn(2+). The 137-residue stretch at 945–1081 (VILATTGTVF…DVKALQDYLG (137 aa)) folds into the MGS-like domain. The tract at residues 945-1081 (VILATTGTVF…DVKALQDYLG (137 aa)) is allosteric domain.

The protein belongs to the CarB family. As to quaternary structure, composed of two chains; the small (or glutamine) chain promotes the hydrolysis of glutamine to ammonia, which is used by the large (or ammonia) chain to synthesize carbamoyl phosphate. Tetramer of heterodimers (alpha,beta)4. Mg(2+) is required as a cofactor. It depends on Mn(2+) as a cofactor.

The catalysed reaction is hydrogencarbonate + L-glutamine + 2 ATP + H2O = carbamoyl phosphate + L-glutamate + 2 ADP + phosphate + 2 H(+). It catalyses the reaction hydrogencarbonate + NH4(+) + 2 ATP = carbamoyl phosphate + 2 ADP + phosphate + 2 H(+). It functions in the pathway amino-acid biosynthesis; L-arginine biosynthesis; carbamoyl phosphate from bicarbonate: step 1/1. The protein operates within pyrimidine metabolism; UMP biosynthesis via de novo pathway; (S)-dihydroorotate from bicarbonate: step 1/3. Its function is as follows. Large subunit of the glutamine-dependent carbamoyl phosphate synthetase (CPSase). CPSase catalyzes the formation of carbamoyl phosphate from the ammonia moiety of glutamine, carbonate, and phosphate donated by ATP, constituting the first step of 2 biosynthetic pathways, one leading to arginine and/or urea and the other to pyrimidine nucleotides. The large subunit (synthetase) binds the substrates ammonia (free or transferred from glutamine from the small subunit), hydrogencarbonate and ATP and carries out an ATP-coupled ligase reaction, activating hydrogencarbonate by forming carboxy phosphate which reacts with ammonia to form carbamoyl phosphate. This chain is Carbamoyl phosphate synthase large chain, found in Synechocystis sp. (strain ATCC 27184 / PCC 6803 / Kazusa).